The following is a 260-amino-acid chain: Ribosomal RNA small subunit methyltransferase A (260 aa).

5 residues coordinate S-adenosyl-L-methionine: leucine 23, glycine 48, glutamate 69, aspartate 94, and asparagine 110.

It belongs to the class I-like SAM-binding methyltransferase superfamily. rRNA adenine N(6)-methyltransferase family. RsmA subfamily.

Its subcellular location is the cytoplasm. It catalyses the reaction adenosine(1518)/adenosine(1519) in 16S rRNA + 4 S-adenosyl-L-methionine = N(6)-dimethyladenosine(1518)/N(6)-dimethyladenosine(1519) in 16S rRNA + 4 S-adenosyl-L-homocysteine + 4 H(+). Functionally, specifically dimethylates two adjacent adenosines (A1518 and A1519) in the loop of a conserved hairpin near the 3'-end of 16S rRNA in the 30S particle. May play a critical role in biogenesis of 30S subunits. This chain is Ribosomal RNA small subunit methyltransferase A, found in Thermotoga petrophila (strain ATCC BAA-488 / DSM 13995 / JCM 10881 / RKU-1).